Reading from the N-terminus, the 335-residue chain is MIIAVDGMGGDFAPELVVEGCIQAVKEYEGIHIIITGKKELIKNELDKREYKGNKIEILNAEEVISTNEAPVKAIRRKKDSSMVKALELVKEGKAQAVISAGSTGALMAGATFVLGRIKGINRVCLAPLLPGAKAPFMIVDAGANVDCKAEYLVQFAMMGKVYFESVLGVKSPTVGLVNIGAEEEKGNELTKAAYKLLKDTDFNFIGNIEPRDIPRGEVNIAVCDGFIGNTVLKTYEGVASNLFSMLKDEMMASTRGKIGGALLKPVFKDFKKKFDYTEYGGSPFLGAKGICIKAHGSSDAKAFKNAIRQAKICYDKKIIEEIENNLGNLIENNI.

The protein belongs to the PlsX family. Homodimer. Probably interacts with PlsY.

It localises to the cytoplasm. The enzyme catalyses a fatty acyl-[ACP] + phosphate = an acyl phosphate + holo-[ACP]. Its pathway is lipid metabolism; phospholipid metabolism. In terms of biological role, catalyzes the reversible formation of acyl-phosphate (acyl-PO(4)) from acyl-[acyl-carrier-protein] (acyl-ACP). This enzyme utilizes acyl-ACP as fatty acyl donor, but not acyl-CoA. This is Phosphate acyltransferase from Clostridium botulinum (strain Loch Maree / Type A3).